The primary structure comprises 187 residues: UPF0302 protein SERP1032 (187 aa).

The protein belongs to the UPF0302 family.

The chain is UPF0302 protein SERP1032 from Staphylococcus epidermidis (strain ATCC 35984 / DSM 28319 / BCRC 17069 / CCUG 31568 / BM 3577 / RP62A).